We begin with the raw amino-acid sequence, 255 residues long: MLTKCEGIVLRTNDYGETNKIVTLLTREHGKIGVMARGARKSASRLSAVSQPFLYGSFLMQRTSGLGTLQQGEMILSMRTIREDLFLTAYAAFIAELTDKGTEEKKPNPYLFELILESFKRLNDGTDPDVITFIVQMKMLGVMGLYPELNHCVHCKSGEGTFHFSIRDNGFICHRCFEKDPYRVPMSPQTARLLRLFYYFDIGRLGSVSLKQETKNEIKRVIDLYYEEYSGLYLKSKRFLDQMESMKNLLDENKS.

Belongs to the RecO family.

Its function is as follows. Involved in DNA repair and RecF pathway recombination. The sequence is that of DNA repair protein RecO from Bacillus velezensis (strain DSM 23117 / BGSC 10A6 / LMG 26770 / FZB42) (Bacillus amyloliquefaciens subsp. plantarum).